The following is a 321-amino-acid chain: Lambda-crystallin homolog (321 aa).

Ser-6 carries the phosphoserine modification. NAD(+) is bound by residues 19-20, Asp-39, Glu-100, and Lys-105; that span reads LI.

It belongs to the 3-hydroxyacyl-CoA dehydrogenase family. Homodimer.

Its subcellular location is the cytoplasm. The enzyme catalyses L-gulonate + NAD(+) = 3-dehydro-L-gulonate + NADH + H(+). Its activity is regulated as follows. Inhibited by malonate. Its function is as follows. Has high L-gulonate 3-dehydrogenase activity. It also exhibits low dehydrogenase activity toward L-3-hydroxybutyrate (HBA) and L-threonate. This is Lambda-crystallin homolog (CRYL1) from Bos taurus (Bovine).